Here is a 978-residue protein sequence, read N- to C-terminus: Sensor histidine kinase TodS (978 aa).

The PAS 1 domain occupies 32–103; that stretch reads CEEHARIIFD…TQKRLVETAS (72 aa). One can recognise a PAC 1 domain in the interval 108 to 162; sequence VRCDVEILGKSGGREVIAVDFSLLPICNEEGSIVYLLAEGRNITDKKKAEAMLAL. One can recognise a Histidine kinase 1 domain in the interval 187 to 405; sequence KVSHELRTPL…LFQVKLPLNA (219 aa). Residue histidine 190 is modified to Phosphohistidine; by autocatalysis. Residues 452–567 form the Response regulatory domain; sequence RVLIVEDNPD…ELRARVSNLV (116 aa). Aspartate 500 bears the 4-aspartylphosphate mark. The region spanning 611-681 is the PAS 2 domain; the sequence is SEARWKAVYE…QRLANLLQGG (71 aa). Residues 685 to 737 form the PAC 2 domain; that stretch reads YSVERSYLCKNGSTIWANASVSLMPQRVGESPVILQIIDDITEKKQAQENLNQ. The region spanning 757 to 974 is the Histidine kinase 2 domain; the sequence is YIAHEINQPL…CFLVSIPARQ (218 aa). A Phosphohistidine modification is found at histidine 760.

Homodimer. Binds as a dimer to a pseudopalindromic sequence. In terms of processing, autophosphorylated. Activation requires a sequential transfer of a phosphate group from a His in the primary transmitter domain, to an Asp in the receiver domain and to a His in the secondary transmitter domain.

It localises to the cytoplasm. The enzyme catalyses ATP + protein L-histidine = ADP + protein N-phospho-L-histidine.. In terms of biological role, member of the two-component regulatory system TodS/TodT involved in the regulation of toluene degradation. Phosphorylates TodT via a four-step phosphorelay in response to toluene. This Pseudomonas putida (strain ATCC 700007 / DSM 6899 / JCM 31910 / BCRC 17059 / LMG 24140 / F1) protein is Sensor histidine kinase TodS (todS).